Reading from the N-terminus, the 393-residue chain is Glucose-1-phosphate adenylyltransferase (393 aa).

Residues tyrosine 105, glycine 170, 185-186 (EK), and serine 196 contribute to the alpha-D-glucose 1-phosphate site.

This sequence belongs to the bacterial/plant glucose-1-phosphate adenylyltransferase family. Homotetramer.

It catalyses the reaction alpha-D-glucose 1-phosphate + ATP + H(+) = ADP-alpha-D-glucose + diphosphate. It participates in glycan biosynthesis; glycogen biosynthesis. In terms of biological role, involved in the biosynthesis of ADP-glucose, a building block required for the elongation reactions to produce glycogen. Catalyzes the reaction between ATP and alpha-D-glucose 1-phosphate (G1P) to produce pyrophosphate and ADP-Glc. This is Glucose-1-phosphate adenylyltransferase from Clostridium perfringens (strain 13 / Type A).